The chain runs to 607 residues: UvrABC system protein C (607 aa).

One can recognise a GIY-YIG domain in the interval 15–93 (RKPGVYRMLD…IKELKPPYNI (79 aa)). The 36-residue stretch at 203–238 (REVADQLSTDMEAAAAALEFEKAALLRDQLAAIQAV) folds into the UVR domain. The span at 542-551 (HRARRGKARK) shows a compositional bias: basic residues. The tract at residues 542–561 (HRARRGKARKQSTLDEIPGI) is disordered.

The protein belongs to the UvrC family. As to quaternary structure, interacts with UvrB in an incision complex.

Its subcellular location is the cytoplasm. Functionally, the UvrABC repair system catalyzes the recognition and processing of DNA lesions. UvrC both incises the 5' and 3' sides of the lesion. The N-terminal half is responsible for the 3' incision and the C-terminal half is responsible for the 5' incision. In Alcanivorax borkumensis (strain ATCC 700651 / DSM 11573 / NCIMB 13689 / SK2), this protein is UvrABC system protein C.